Consider the following 614-residue polypeptide: Pyrophosphate--fructose 6-phosphate 1-phosphotransferase subunit alpha 1 (614 aa).

It belongs to the phosphofructokinase type A (PFKA) family. PPi-dependent PFK group II subfamily. Clade 'Long' sub-subfamily. In terms of assembly, tetramer of two alpha (regulatory) and two beta (catalytic) chains. In terms of tissue distribution, expressed in leaves, roots, and flowers (e.g. sepals, petals, stamen and gynoecium).

Its subcellular location is the cytoplasm. Its pathway is carbohydrate degradation; glycolysis; D-glyceraldehyde 3-phosphate and glycerone phosphate from D-glucose: step 3/4. Its activity is regulated as follows. Allosterically activated by fructose 2,6-bisphosphate. Its function is as follows. Regulatory subunit of pyrophosphate--fructose 6-phosphate 1-phosphotransferase. This chain is Pyrophosphate--fructose 6-phosphate 1-phosphotransferase subunit alpha 1, found in Arabidopsis thaliana (Mouse-ear cress).